Here is a 188-residue protein sequence, read N- to C-terminus: GTP cyclohydrolase 1 (188 aa).

Residues Cys-75, His-78, and Cys-146 each contribute to the Zn(2+) site.

The protein belongs to the GTP cyclohydrolase I family. In terms of assembly, toroid-shaped homodecamer, composed of two pentamers of five dimers.

It catalyses the reaction GTP + H2O = 7,8-dihydroneopterin 3'-triphosphate + formate + H(+). It functions in the pathway cofactor biosynthesis; 7,8-dihydroneopterin triphosphate biosynthesis; 7,8-dihydroneopterin triphosphate from GTP: step 1/1. This chain is GTP cyclohydrolase 1, found in Hahella chejuensis (strain KCTC 2396).